A 495-amino-acid chain; its full sequence is Probable lysine-specific demethylase 4A (495 aa).

The region spanning 18–60 (IMTFRPSYEEFQNFSAYIEYIESRGAHLAGLAKIQPPAEWVPR) is the JmjN domain. Tyr139 serves as a coordination point for 2-oxoglutarate. The JmjC domain maps to 149–315 (DEDLDVWNIG…YGKRASICRC (167 aa)). 2 residues coordinate Fe cation: His195 and Glu197. Residues Asn205 and Lys213 each contribute to the 2-oxoglutarate site. Zn(2+)-binding residues include Cys241 and His247. Position 248 (Lys248) interacts with 2-oxoglutarate. Position 283 (His283) interacts with Fe cation. Positions 313 and 315 each coordinate Zn(2+). Ser409 bears the Phosphoserine mark.

This sequence belongs to the JHDM3 histone demethylase family. Requires Fe(2+) as cofactor.

Its subcellular location is the nucleus. The catalysed reaction is N(6),N(6),N(6)-trimethyl-L-lysyl(9)-[histone H3] + 2 2-oxoglutarate + 2 O2 = N(6)-methyl-L-lysyl(9)-[histone H3] + 2 formaldehyde + 2 succinate + 2 CO2. The enzyme catalyses N(6),N(6),N(6)-trimethyl-L-lysyl(36)-[histone H3] + 2 2-oxoglutarate + 2 O2 = N(6)-methyl-L-lysyl(36)-[histone H3] + 2 formaldehyde + 2 succinate + 2 CO2. Functionally, probable histone demethylase that specifically demethylates 'Lys-9' and 'Lys-36' residues of histone H3, thereby playing a central role in histone code. Demethylation of Lys residue generates formaldehyde and succinate. This is Probable lysine-specific demethylase 4A (Kdm4A) from Drosophila melanogaster (Fruit fly).